A 356-amino-acid chain; its full sequence is Peptide chain release factor 1 (356 aa).

Q233 bears the N5-methylglutamine mark.

This sequence belongs to the prokaryotic/mitochondrial release factor family. Methylated by PrmC. Methylation increases the termination efficiency of RF1.

Its subcellular location is the cytoplasm. Peptide chain release factor 1 directs the termination of translation in response to the peptide chain termination codons UAG and UAA. The protein is Peptide chain release factor 1 of Shouchella clausii (strain KSM-K16) (Alkalihalobacillus clausii).